A 139-amino-acid polypeptide reads, in one-letter code: Putative pre-16S rRNA nuclease (139 aa).

The protein belongs to the YqgF nuclease family.

It localises to the cytoplasm. Functionally, could be a nuclease involved in processing of the 5'-end of pre-16S rRNA. The polypeptide is Putative pre-16S rRNA nuclease (Streptococcus pyogenes serotype M2 (strain MGAS10270)).